A 104-amino-acid chain; its full sequence is Large ribosomal subunit protein bL21 (104 aa).

It belongs to the bacterial ribosomal protein bL21 family. In terms of assembly, part of the 50S ribosomal subunit. Contacts protein L20.

Its function is as follows. This protein binds to 23S rRNA in the presence of protein L20. This is Large ribosomal subunit protein bL21 from Clostridium botulinum (strain Kyoto / Type A2).